The chain runs to 286 residues: Polyamine aminopropyltransferase (286 aa).

A PABS domain is found at 5–238; it reads TMWHETLHDQ…GIMTFAWATD (234 aa). Q33 contributes to the S-methyl-5'-thioadenosine binding site. Residues H64 and D88 each coordinate spermidine. S-methyl-5'-thioadenosine-binding positions include E108 and 140 to 141; that span reads DG. Residue D158 is the Proton acceptor of the active site. Residue 158–161 participates in spermidine binding; sequence DCTD. Position 165 (P165) interacts with S-methyl-5'-thioadenosine.

The protein belongs to the spermidine/spermine synthase family. Homodimer or homotetramer.

It is found in the cytoplasm. It carries out the reaction S-adenosyl 3-(methylsulfanyl)propylamine + putrescine = S-methyl-5'-thioadenosine + spermidine + H(+). Its pathway is amine and polyamine biosynthesis; spermidine biosynthesis; spermidine from putrescine: step 1/1. Catalyzes the irreversible transfer of a propylamine group from the amino donor S-adenosylmethioninamine (decarboxy-AdoMet) to putrescine (1,4-diaminobutane) to yield spermidine. The polypeptide is Polyamine aminopropyltransferase (Salmonella paratyphi A (strain ATCC 9150 / SARB42)).